The sequence spans 218 residues: Dynein axonemal assembly factor 6 (218 aa).

The tract at residues 66-103 (MGPGNIGPPKAKESKAIPEPRSDESENIWNPEEVPEGA) is disordered. Positions 75-89 (KAKESKAIPEPRSDE) are enriched in basic and acidic residues.

This sequence belongs to the PIH1 family. In terms of assembly, interacts with HSPA1A/B, HSP90AA1 and DNAI2. Interacts with DNAAF2 and DNAAF4. As to expression, specifically expressed in testis. Detected in pachytene spermatocytes from 5 weeks of age and in pachytene and diplotene spermatocytes of adult mice. Not detected in spermatids or mature sperm.

Its subcellular location is the cytoplasm. It localises to the golgi apparatus. The protein localises to the trans-Golgi network. Plays a role in cytoplasmic pre-assembly of axonemal dynein. This Mus musculus (Mouse) protein is Dynein axonemal assembly factor 6.